Consider the following 408-residue polypeptide: Acetate kinase (408 aa).

Asn-7 is a binding site for Mg(2+). ATP is bound at residue Lys-14. Residue Arg-91 coordinates substrate. Asp-148 serves as the catalytic Proton donor/acceptor. ATP contacts are provided by residues 208 to 212 (HLGNG), 283 to 285 (DFR), and 331 to 335 (GIGEN). Position 384 (Glu-384) interacts with Mg(2+).

The protein belongs to the acetokinase family. Homodimer. The cofactor is Mg(2+). It depends on Mn(2+) as a cofactor.

Its subcellular location is the cytoplasm. It catalyses the reaction acetate + ATP = acetyl phosphate + ADP. It functions in the pathway metabolic intermediate biosynthesis; acetyl-CoA biosynthesis; acetyl-CoA from acetate: step 1/2. Inhibited by diethylpyrocarbonate, hydroxylamine and phenylglyoxal. In terms of biological role, catalyzes the formation of acetyl phosphate from acetate and ATP. Can also catalyze the reverse reaction. Can also phosphorylate propionate, but has very low activity toward butyrate. The chain is Acetate kinase from Methanosarcina thermophila.